A 382-amino-acid polypeptide reads, in one-letter code: MATLSTHPNYGFHLGQAQGLEDYAPQSQLQLSPGMDMDIKRVLHYSQSLAAMGGSPNGPAGQGVNGSSGMGHHMSSHMTPHHMHQAVSAQQTLSPNSSIGSAGSLGSQSSLGSNGSGLNSSSGHQSAGMHSLATSPGQEGHIKRPMNAFMVWSRLQRRQIAKDNPKMHNSEISKRLGAEWKLLAESEKRPFIDEAKRLRALHMKEHPDYKYRPRRKPKNPLTAGPQGGLQMQAGGMGQQKLGAGPGAGAGGYNPFHQLPPYFAPSHHLDQGYPVPYFGGFDPLALSKLHQSQAAAAAAVNNQGQQQGQAPPQLPPTSLSSFYSGIYSGISAPSLYAAHSANAAGLYPSSSTSSPGSSPGTITPNGMDGSMDSALRRPVPVLY.

Disordered regions lie at residues 53 to 142 (GGSP…EGHI) and 346 to 382 (YPSSSTSSPGSSPGTITPNGMDGSMDSALRRPVPVLY). Residues 60-69 (AGQGVNGSSG) are compositionally biased toward gly residues. Positions 96–123 (NSSIGSAGSLGSQSSLGSNGSGLNSSSG) are enriched in low complexity. The HMG box DNA-binding region spans 142 to 210 (IKRPMNAFMV…LHMKEHPDYK (69 aa)). A compositionally biased stretch (low complexity) spans 347-360 (PSSSTSSPGSSPGT).

Initially expressed in a pair-rule-like pattern which is rapidly replaced by strong neuroectoderm expression.

The protein resides in the nucleus. In terms of biological role, essential for segmentation and CNS development. May modulate the actions of other transcription factors, including gap and pair-rule proteins. The sequence is that of SOX domain-containing protein dichaete (D) from Drosophila melanogaster (Fruit fly).